Here is a 103-residue protein sequence, read N- to C-terminus: uncharacterized protein (103 aa).

The next 2 membrane-spanning stretches (helical) occupy residues 42-62 (PFPL…VLLA) and 65-85 (TGTL…FICA).

The protein resides in the membrane. This is an uncharacterized protein from Saccharomyces cerevisiae (strain ATCC 204508 / S288c) (Baker's yeast).